A 506-amino-acid polypeptide reads, in one-letter code: CTL-like protein DDB_G0269978 (506 aa).

N-linked (GlcNAc...) asparagine glycosylation is found at Asn15 and Asn41. 12 consecutive transmembrane segments (helical) span residues 91-111 (LLYS…TVIA), 126-146 (LQGL…FLIW), 161-181 (SFFS…GNGW), 182-202 (YSWA…YFAF), 226-246 (TLLV…IWLF), 256-276 (SYWT…LYWT), 279-299 (VITY…YFFA), 323-343 (FGSI…QFIC), 345-367 (GFAR…ALIF), 371-393 (LYTF…CNSS), 416-436 (ITML…VTMI), and 447-467 (WLYV…DIIF).

The protein belongs to the CTL (choline transporter-like) family.

It is found in the membrane. The protein is CTL-like protein DDB_G0269978 of Dictyostelium discoideum (Social amoeba).